The chain runs to 366 residues: Ferredoxin--NADP reductase, leaf isozyme 2, chloroplastic (366 aa).

Residues M1 to R48 constitute a chloroplast transit peptide. The 123-residue stretch at K87–M209 folds into the FAD-binding FR-type domain. FAD-binding positions include R145–S148, C166–K168, Y172, and V183–S185. NADP(+) contacts are provided by S148 and K168. C184 and C189 are joined by a disulfide. Position 185 is a phosphoserine (S185). Phosphothreonine is present on T216. T224 is a binding site for FAD. Residues T224, V256–P257, S286–R287, K296, G325–L326, and E364 contribute to the NADP(+) site.

It belongs to the ferredoxin--NADP reductase type 1 family. As to quaternary structure, heterodimer with LFNR1. Component of high molecular weight thylakoid LFNRs-containing protein complexes containing LIR1, LFNR1, LFNR2, TIC62 and TROL proteins. Interacts directly with LFNR1 and LFNR2; LIR1 increases the affinity of LFNR1 and LFNR2 for TIC62 and subsequent thylakoid relocalization. FAD serves as cofactor. May form interchain disulfide bonds with LIR1.

Its subcellular location is the plastid. The protein localises to the chloroplast stroma. It localises to the chloroplast thylakoid membrane. It carries out the reaction 2 reduced [2Fe-2S]-[ferredoxin] + NADP(+) + H(+) = 2 oxidized [2Fe-2S]-[ferredoxin] + NADPH. It participates in energy metabolism; photosynthesis. Plays a key role in regulating the relative amounts of cyclic and non-cyclic electron flow to meet the demands of the plant for ATP and reducing power. In Oryza sativa subsp. indica (Rice), this protein is Ferredoxin--NADP reductase, leaf isozyme 2, chloroplastic.